The following is a 994-amino-acid chain: Regulator of telomere elongation helicase 1 homolog (994 aa).

A Helicase ATP-binding domain is found at 7 to 316 (AGIPVHFPFE…DDLMLLKEML (310 aa)). 42–49 (SPTGTGKT) is an ATP binding site. C146, C164, C173, and C209 together coordinate [4Fe-4S] cluster. The short motif at 252-255 (DEAH) is the DEAH box element. Residues 861–887 (SSGLVKIHKRERSSPPGSSQSSSQTAK) are disordered. Residues 874 to 884 (SPPGSSQSSSQ) are compositionally biased toward low complexity.

Belongs to the helicase family. RAD3/XPD subfamily.

The protein localises to the nucleus. The catalysed reaction is ATP + H2O = ADP + phosphate + H(+). Functionally, a probable ATP-dependent DNA helicase implicated in DNA repair and the maintenance of genomic stability. Acts as an anti-recombinase to counteract toxic recombination and limit crossover during meiosis. Regulates meiotic recombination and crossover homeostasis by physically dissociating strand invasion events and thereby promotes noncrossover repair by meiotic synthesis dependent strand annealing (SDSA) as well as disassembly of D loop recombination intermediates. The polypeptide is Regulator of telomere elongation helicase 1 homolog (Drosophila ananassae (Fruit fly)).